The chain runs to 145 residues: MILMVIVFLLLLFWENELTEDVVLTSMEHLHVDYPQSAVPLRYCNYMILQRVIREPDYTCRKVHVFIHERPQKINRICTSSKKMTCPNYSEIFCFQSDTKFRMTVCQLTGGSKYPACRYQISPTEGFVLVTCDDLGPVNFQGYVE.

The N-terminal stretch at 1 to 19 (MILMVIVFLLLLFWENELT) is a signal peptide. The N-linked (GlcNAc...) asparagine glycan is linked to Asn88.

It belongs to the pancreatic ribonuclease family.

The protein localises to the secreted. Functionally, does not exhibit any ribonuclease activity. This is Probable inactive ribonuclease-like protein 12 (Rnase12) from Rattus norvegicus (Rat).